The sequence spans 404 residues: Phosphoglycerate kinase (404 aa).

Substrate is bound by residues Asp-21–Asn-23, Arg-36, His-59–Arg-62, Arg-119, and Arg-162. Residues Lys-213, Gly-300, Glu-331, and Gly-360 to Ser-363 contribute to the ATP site.

It belongs to the phosphoglycerate kinase family. In terms of assembly, monomer.

It localises to the cytoplasm. The enzyme catalyses (2R)-3-phosphoglycerate + ATP = (2R)-3-phospho-glyceroyl phosphate + ADP. Its pathway is carbohydrate degradation; glycolysis; pyruvate from D-glyceraldehyde 3-phosphate: step 2/5. This chain is Phosphoglycerate kinase, found in Oenococcus oeni (strain ATCC BAA-331 / PSU-1).